Here is a 396-residue protein sequence, read N- to C-terminus: Tryptophan synthase beta chain (396 aa).

An N6-(pyridoxal phosphate)lysine modification is found at Lys86.

It belongs to the TrpB family. Tetramer of two alpha and two beta chains. Pyridoxal 5'-phosphate serves as cofactor.

It carries out the reaction (1S,2R)-1-C-(indol-3-yl)glycerol 3-phosphate + L-serine = D-glyceraldehyde 3-phosphate + L-tryptophan + H2O. Its pathway is amino-acid biosynthesis; L-tryptophan biosynthesis; L-tryptophan from chorismate: step 5/5. In terms of biological role, the beta subunit is responsible for the synthesis of L-tryptophan from indole and L-serine. This chain is Tryptophan synthase beta chain, found in Photobacterium profundum (strain SS9).